The primary structure comprises 116 residues: ATP synthase lipid-binding protein, mitochondrial (116 aa).

Residues 1-24 constitute a mitochondrion transit peptide; that stretch reads MYCQRLALPLTRSLLASRAPLALR. Residues 57–77 form a helical membrane-spanning segment; it reads VGVAGSGAGIGNVFGALVIGY. Residue Lys-84 is modified to N6,N6,N6-trimethyllysine. The chain crosses the membrane as a helical span at residues 92–112; sequence ILGFALSEAMGLFCLTMGFMI.

It belongs to the ATPase C chain family. In terms of assembly, F-type ATPases have 2 components, CF(1) - the catalytic core - and CF(0) - the membrane proton channel. CF(1) has five subunits: alpha(3), beta(3), gamma(1), delta(1), epsilon(1). CF(0) has three main subunits: a, b and c. Post-translationally, trimethylated by ATPSCKMT at Lys-84. Methylation may be required for proper incorporation of the C subunit into the ATP synthase complex and mitochondrial respiration.

It localises to the mitochondrion membrane. In terms of biological role, mitochondrial membrane ATP synthase (F(1)F(0) ATP synthase or Complex V) produces ATP from ADP in the presence of a proton gradient across the membrane which is generated by electron transport complexes of the respiratory chain. F-type ATPases consist of two structural domains, F(1) - containing the extramembraneous catalytic core and F(0) - containing the membrane proton channel, linked together by a central stalk and a peripheral stalk. During catalysis, ATP synthesis in the catalytic domain of F(1) is coupled via a rotary mechanism of the central stalk subunits to proton translocation. Part of the complex F(0) domain. A homomeric c-ring of probably 10 subunits is part of the complex rotary element. This Caenorhabditis briggsae protein is ATP synthase lipid-binding protein, mitochondrial.